A 436-amino-acid chain; its full sequence is Methylenetetrahydrofolate--tRNA-(uracil-5-)-methyltransferase TrmFO (436 aa).

8–13 contacts FAD; sequence GGGLAG.

Belongs to the MnmG family. TrmFO subfamily. Requires FAD as cofactor.

Its subcellular location is the cytoplasm. It catalyses the reaction uridine(54) in tRNA + (6R)-5,10-methylene-5,6,7,8-tetrahydrofolate + NADH + H(+) = 5-methyluridine(54) in tRNA + (6S)-5,6,7,8-tetrahydrofolate + NAD(+). The catalysed reaction is uridine(54) in tRNA + (6R)-5,10-methylene-5,6,7,8-tetrahydrofolate + NADPH + H(+) = 5-methyluridine(54) in tRNA + (6S)-5,6,7,8-tetrahydrofolate + NADP(+). Catalyzes the folate-dependent formation of 5-methyl-uridine at position 54 (M-5-U54) in all tRNAs. This chain is Methylenetetrahydrofolate--tRNA-(uracil-5-)-methyltransferase TrmFO, found in Syntrophomonas wolfei subsp. wolfei (strain DSM 2245B / Goettingen).